Reading from the N-terminus, the 998-residue chain is Calcium-transporting ATPase 3, endoplasmic reticulum-type (998 aa).

Residues 1-48 (MEDAYARSVSEVLDFFGVDPTKGLSDSQVVHHSRLYGRNVLPEEKRTP) are Cytoplasmic-facing. A helical transmembrane segment spans residues 49 to 69 (FWKLVLKQFDDLLVKILIVAA). Residues 70 to 89 (IVSFVLALANGETGLTAFLE) are Lumenal-facing. A helical membrane pass occupies residues 90–109 (PFVILLILAANAAVGVITET). Topologically, residues 110 to 250 (NAEKALEELR…DEATPLKKKL (141 aa)) are cytoplasmic. A helical transmembrane segment spans residues 251–270 (DEFGSFLAKVIAGICVLVWV). Topologically, residues 271-291 (VNIGHFSDPSHGGFFKGAIHY) are lumenal. Residues 292–309 (FKIAVALAVAAIPEGLPA) form a helical membrane-spanning segment. Ca(2+)-binding residues include Val-300, Ala-301, Ile-303, and Glu-305. Residues 310-746 (VVTTCLALGT…AEGRAIYNNT (437 aa)) are Cytoplasmic-facing. Catalysis depends on Asp-347, which acts as the 4-aspartylphosphate intermediate. Mg(2+) contacts are provided by Asp-692 and Asp-696. The helical transmembrane segment at 747 to 766 (KQFIRYMISSNIGEVVCIFV) threads the bilayer. Ca(2+) contacts are provided by Asn-757 and Glu-760. Over 767-776 (AAVLGIPDTL) the chain is Lumenal. A helical transmembrane segment spans residues 777 to 797 (APVQLLWVNLVTDGLPATAIG). Ca(2+) contacts are provided by Asn-785, Thr-788, and Asp-789. At 798–817 (FNKQDSDVMKAKPRKVGEAV) the chain is on the cytoplasmic side. A helical membrane pass occupies residues 818–840 (VTGWLFFRYLVIGVYVGLATVAG). Residues 841–883 (FIWWFVYSDGGPKLTYSELMNFETCALRETTYPCSIFEDRHPS) lie on the Lumenal side of the membrane. The chain crosses the membrane as a helical span at residues 884–903 (TVAMTVLVVVEMFNALNNLS). A Ca(2+)-binding site is contributed by Glu-894. Residues 904-916 (ENQSLLVITPRSN) lie on the Cytoplasmic side of the membrane. The chain crosses the membrane as a helical span at residues 917 to 935 (LWLVGSIILTMLLHVLILY). Over 936–950 (VHPLAVLFSVTPLSW) the chain is Lumenal. Residues 951-971 (AEWTAVLYLSFPVIIIDELLK) traverse the membrane as a helical segment. Residues 972–998 (FLSRNTGMRFRFRLRKADLLPKDRRDK) lie on the Cytoplasmic side of the membrane.

It belongs to the cation transport ATPase (P-type) (TC 3.A.3) family. Type IIA subfamily. Expressed in root cap, in elongation and differentiation zones of roots, in vascular tissues of roots, leaves, floral pedicels and style, in leaves, including hydathodes and guard cells, in stamens, in petals, in sepals and in siliques.

It localises to the golgi apparatus membrane. It is found in the endosome membrane. The protein localises to the prevacuolar compartment membrane. The catalysed reaction is Ca(2+)(in) + ATP + H2O = Ca(2+)(out) + ADP + phosphate + H(+). Its function is as follows. This magnesium-dependent enzyme catalyzes the hydrolysis of ATP coupled with the translocation of calcium from the cytosol to an endomembrane compartment. Involved in calcium-enhanced root growth, in tolerance to toxic levels of manganese and in secretory processes. Has a crucial role in manganese nutrition, but is not involved in transporting copper, iron or zinc. This chain is Calcium-transporting ATPase 3, endoplasmic reticulum-type, found in Arabidopsis thaliana (Mouse-ear cress).